The following is a 410-amino-acid chain: Peptidase T (410 aa).

Histidine 79 provides a ligand contact to Zn(2+). The active site involves aspartate 81. Aspartate 142 serves as a coordination point for Zn(2+). The active-site Proton acceptor is glutamate 176. Zn(2+) contacts are provided by glutamate 177, aspartate 199, and histidine 381.

It belongs to the peptidase M20B family. Requires Zn(2+) as cofactor.

Its subcellular location is the cytoplasm. The catalysed reaction is Release of the N-terminal residue from a tripeptide.. In terms of biological role, cleaves the N-terminal amino acid of tripeptides. In Brevibacillus brevis (strain 47 / JCM 6285 / NBRC 100599), this protein is Peptidase T.